A 633-amino-acid chain; its full sequence is Probable extracellular metalloproteinase 3 (633 aa).

The N-terminal stretch at 1–18 (MHGLLLAGLLALPMNVLA) is a signal peptide. Positions 19–246 (HPAEQHASNV…VHNVVDYVAS (228 aa)) are excised as a propeptide. N-linked (GlcNAc...) asparagine glycosylation occurs at asparagine 410. Histidine 429 serves as a coordination point for Zn(2+). Residue glutamate 430 is part of the active site. Histidine 433 provides a ligand contact to Zn(2+). N-linked (GlcNAc...) asparagine glycosylation is found at asparagine 480 and asparagine 622.

The protein belongs to the peptidase M36 family. Zn(2+) serves as cofactor.

It is found in the secreted. Functionally, secreted metalloproteinase probably acting as a virulence factor. The polypeptide is Probable extracellular metalloproteinase 3 (MEP3) (Trichophyton verrucosum (strain HKI 0517)).